Consider the following 465-residue polypeptide: Glutamate--tRNA ligase (465 aa).

A 'HIGH' region motif is present at residues 11–21 (PSPTGFIHLGN). A compositionally biased stretch (basic and acidic residues) spans 120 to 131 (KPRYDGTWRPEP). Positions 120–139 (KPRYDGTWRPEPGKVLPTPP) are disordered. Residues 243–247 (KMSKR) carry the 'KMSKS' region motif. K246 serves as a coordination point for ATP.

This sequence belongs to the class-I aminoacyl-tRNA synthetase family. Glutamate--tRNA ligase type 1 subfamily. In terms of assembly, monomer.

Its subcellular location is the cytoplasm. The enzyme catalyses tRNA(Glu) + L-glutamate + ATP = L-glutamyl-tRNA(Glu) + AMP + diphosphate. Catalyzes the attachment of glutamate to tRNA(Glu) in a two-step reaction: glutamate is first activated by ATP to form Glu-AMP and then transferred to the acceptor end of tRNA(Glu). This chain is Glutamate--tRNA ligase, found in Ralstonia nicotianae (strain ATCC BAA-1114 / GMI1000) (Ralstonia solanacearum).